We begin with the raw amino-acid sequence, 232 residues long: Small ribosomal subunit protein uS3 (232 aa).

Positions 39–107 (VRQFLTKELQ…PAQINIAEVR (69 aa)) constitute a KH type-2 domain. The disordered stretch occupies residues 213-232 (AANAVEPKGDKPKKQRKGRK).

Belongs to the universal ribosomal protein uS3 family. As to quaternary structure, part of the 30S ribosomal subunit. Forms a tight complex with proteins S10 and S14.

In terms of biological role, binds the lower part of the 30S subunit head. Binds mRNA in the 70S ribosome, positioning it for translation. This is Small ribosomal subunit protein uS3 from Vibrio campbellii (strain ATCC BAA-1116).